The primary structure comprises 271 residues: Ribonuclease 3 (271 aa).

The 135-residue stretch at 5-139 (PALLELKLDY…IMAAIYLDGG (135 aa)) folds into the RNase III domain. Glutamate 52 contributes to the Mg(2+) binding site. Residue aspartate 56 is part of the active site. Positions 125 and 128 each coordinate Mg(2+). Residue glutamate 128 is part of the active site. Positions 172 to 241 (NFKSALQELA…ARGLYERLMG (70 aa)) constitute a DRBM domain. Residues 241–271 (GDPIVPLPDDSPGDSPDDSGDAAESGVISAT) form a disordered region. The segment covering 251-261 (SPGDSPDDSGD) has biased composition (acidic residues).

The protein belongs to the ribonuclease III family. As to quaternary structure, homodimer. Mg(2+) is required as a cofactor.

The protein localises to the cytoplasm. The catalysed reaction is Endonucleolytic cleavage to 5'-phosphomonoester.. Digests double-stranded RNA. Involved in the processing of primary rRNA transcript to yield the immediate precursors to the large and small rRNAs (23S and 16S). Processes some mRNAs, and tRNAs when they are encoded in the rRNA operon. Processes pre-crRNA and tracrRNA of type II CRISPR loci if present in the organism. This Solibacter usitatus (strain Ellin6076) protein is Ribonuclease 3.